A 380-amino-acid polypeptide reads, in one-letter code: Chaperone protein DnaJ (380 aa).

In terms of domain architecture, J spans 5–72 (DFYEVLGVAK…NKRAAYDQYG (68 aa)). A CR-type zinc finger spans residues 140-218 (GKDAQIRIPS…CGGQGKVKRQ (79 aa)). Residues Cys153, Cys156, Cys170, Cys173, Cys192, Cys195, Cys206, and Cys209 each contribute to the Zn(2+) site. 4 CXXCXGXG motif repeats span residues 153-160 (CDTCHGSG), 170-177 (CTTCNGMG), 192-199 (CPHCRGTG), and 206-213 (CTSCGGQG). Positions 359-380 (KGGAKHSPSGESWTDRLKSFFS) are disordered. Residues 371 to 380 (WTDRLKSFFS) are compositionally biased toward basic and acidic residues.

Belongs to the DnaJ family. Homodimer. Requires Zn(2+) as cofactor.

It is found in the cytoplasm. Functionally, participates actively in the response to hyperosmotic and heat shock by preventing the aggregation of stress-denatured proteins and by disaggregating proteins, also in an autonomous, DnaK-independent fashion. Unfolded proteins bind initially to DnaJ; upon interaction with the DnaJ-bound protein, DnaK hydrolyzes its bound ATP, resulting in the formation of a stable complex. GrpE releases ADP from DnaK; ATP binding to DnaK triggers the release of the substrate protein, thus completing the reaction cycle. Several rounds of ATP-dependent interactions between DnaJ, DnaK and GrpE are required for fully efficient folding. Also involved, together with DnaK and GrpE, in the DNA replication of plasmids through activation of initiation proteins. This Delftia acidovorans (strain DSM 14801 / SPH-1) protein is Chaperone protein DnaJ.